The following is a 303-amino-acid chain: Protoheme IX farnesyltransferase (303 aa).

9 helical membrane-spanning segments follow: residues 26–46 (VVAL…PGMV), 48–68 (IDIL…AAAV), 98–118 (AILF…VWVN), 120–140 (LTAW…TFWL), 148–168 (IVIG…AVTG), 174–194 (ALLL…ALAV), 221–241 (ILLY…THML), 244–264 (LYLL…VAMM), and 278–298 (YSIV…YLLP).

Belongs to the UbiA prenyltransferase family. Protoheme IX farnesyltransferase subfamily.

It localises to the cell inner membrane. It catalyses the reaction heme b + (2E,6E)-farnesyl diphosphate + H2O = Fe(II)-heme o + diphosphate. It participates in porphyrin-containing compound metabolism; heme O biosynthesis; heme O from protoheme: step 1/1. Converts heme B (protoheme IX) to heme O by substitution of the vinyl group on carbon 2 of heme B porphyrin ring with a hydroxyethyl farnesyl side group. In Saccharophagus degradans (strain 2-40 / ATCC 43961 / DSM 17024), this protein is Protoheme IX farnesyltransferase.